The following is a 436-amino-acid chain: Enolase (436 aa).

Q167 contributes to the (2R)-2-phosphoglycerate binding site. Residue E209 is the Proton donor of the active site. 3 residues coordinate Mg(2+): D246, E291, and D318. 4 residues coordinate (2R)-2-phosphoglycerate: K343, R372, S373, and K394. Catalysis depends on K343, which acts as the Proton acceptor.

Belongs to the enolase family. As to quaternary structure, component of the RNA degradosome, a multiprotein complex involved in RNA processing and mRNA degradation. Requires Mg(2+) as cofactor.

Its subcellular location is the cytoplasm. The protein localises to the secreted. It localises to the cell surface. It catalyses the reaction (2R)-2-phosphoglycerate = phosphoenolpyruvate + H2O. The protein operates within carbohydrate degradation; glycolysis; pyruvate from D-glyceraldehyde 3-phosphate: step 4/5. Catalyzes the reversible conversion of 2-phosphoglycerate (2-PG) into phosphoenolpyruvate (PEP). It is essential for the degradation of carbohydrates via glycolysis. The sequence is that of Enolase from Haemophilus influenzae (strain PittGG).